We begin with the raw amino-acid sequence, 555 residues long: 2-isopropylmalate synthase (555 aa).

The Pyruvate carboxyltransferase domain occupies 30–303; it reads PIWCSVDLRD…DPGLDCTDIN (274 aa). Mg(2+) contacts are provided by Asp-39, His-242, His-244, and Asn-278. Positions 437-555 are regulatory domain; sequence QPDARIKFVD…VSAANRVIAK (119 aa).

Belongs to the alpha-IPM synthase/homocitrate synthase family. LeuA type 2 subfamily. Homodimer. It depends on Mg(2+) as a cofactor.

The protein resides in the cytoplasm. It catalyses the reaction 3-methyl-2-oxobutanoate + acetyl-CoA + H2O = (2S)-2-isopropylmalate + CoA + H(+). It participates in amino-acid biosynthesis; L-leucine biosynthesis; L-leucine from 3-methyl-2-oxobutanoate: step 1/4. Its function is as follows. Catalyzes the condensation of the acetyl group of acetyl-CoA with 3-methyl-2-oxobutanoate (2-ketoisovalerate) to form 3-carboxy-3-hydroxy-4-methylpentanoate (2-isopropylmalate). This is 2-isopropylmalate synthase from Brucella melitensis biotype 1 (strain ATCC 23456 / CCUG 17765 / NCTC 10094 / 16M).